The chain runs to 141 residues: ATP synthase epsilon chain (141 aa).

This sequence belongs to the ATPase epsilon chain family. In terms of assembly, F-type ATPases have 2 components, CF(1) - the catalytic core - and CF(0) - the membrane proton channel. CF(1) has five subunits: alpha(3), beta(3), gamma(1), delta(1), epsilon(1). CF(0) has three main subunits: a, b and c.

The protein localises to the cell inner membrane. Functionally, produces ATP from ADP in the presence of a proton gradient across the membrane. The polypeptide is ATP synthase epsilon chain (Burkholderia ambifaria (strain ATCC BAA-244 / DSM 16087 / CCUG 44356 / LMG 19182 / AMMD) (Burkholderia cepacia (strain AMMD))).